An 845-amino-acid polypeptide reads, in one-letter code: Beta-glucosidase B (845 aa).

N-linked (GlcNAc...) asparagine glycosylation occurs at Asn202. Asp230 is a catalytic residue. N-linked (GlcNAc...) asparagine glycosylation occurs at Asn235. One can recognise a PA14 domain in the interval 406-557 (EGQPGWTLDF…HNRDLLSEAV (152 aa)). N-linked (GlcNAc...) asparagine glycans are attached at residues Asn591, Asn612, and Asn794.

This sequence belongs to the glycosyl hydrolase 3 family.

It catalyses the reaction Hydrolysis of terminal, non-reducing beta-D-glucosyl residues with release of beta-D-glucose.. The protein operates within glycan metabolism; cellulose degradation. Beta-glucosidases are one of a number of cellulolytic enzymes involved in the degradation of cellulosic biomass. Catalyzes the last step releasing glucose from the inhibitory cellobiose. This chain is Beta-glucosidase B (bglB), found in Emericella nidulans (strain FGSC A4 / ATCC 38163 / CBS 112.46 / NRRL 194 / M139) (Aspergillus nidulans).